The sequence spans 239 residues: SKA complex subunit 1 (239 aa).

The segment at 87 to 115 (PDSVPQKSTRPCLDDEKEGSSVVQPPESG) is disordered. A microtubule binding region spans residues 116-239 (NRHVQLISEQ…RCGPLTFYYA (124 aa)).

Belongs to the SKA1 family. Component of the SKA complex, composed of two copies of ska-1 and a single copy of ska-3. The core complex associates with microtubules and may form dimeric assemblies. Interacts with ska-3 and microtubules.

It localises to the cytoplasm. It is found in the cytoskeleton. The protein localises to the spindle. The protein resides in the chromosome. Its subcellular location is the centromere. It localises to the kinetochore. In terms of biological role, component of the SKA complex, a microtubule plus end-binding complex of the outer kinetochore that stabilizes spindle microtubule-kinetochore attachments, promotes alignment of chromosomes at the mitotic spindle equator (chromosome congression) and assists suppression of the spindle assembly checkpoint. Kinetochores, consisting of a centromere-associated inner segment and a microtubule-contacting outer segment, play a crucial role in chromosome segregation by mediating the physical connection between centromeric DNA and spindle microtubules. The outer kinetochore is made up of the ten-subunit KMN network complex, comprising the MIS12, NDC80 and KNL1 complexes, and auxiliary microtubule-associated components such as the SKA complex; together they connect the outer kinetochore with the inner kinetochore, bind microtubules, and mediate interactions with mitotic checkpoint proteins that delay anaphase until chromosomes are bioriented on the spindle. The SKA complex is loaded onto bioriented kinetochores and it facilitates chromosome congression by stabilizing microtubules and end-on attachment of the NDC80 complex to depolymerizing spindle microtubules, thereby assisting the poleward-moving kinetochore in withstanding microtubule pulling forces. The complex associates with dynamic microtubule plus-ends and can track both depolymerizing and elongating microtubules. The complex recruits protein phosphatase 1 (PP1) to the kinetochore in prometaphase and metaphase, to oppose spindle assembly checkpoint signaling and promote the onset of anaphase. In the complex, it mediates interactions with microtubules. During meiosis the SKA complex stabilizes the meiotic spindle and is required for its migration to the cortex. In Caenorhabditis briggsae, this protein is SKA complex subunit 1.